A 146-amino-acid chain; its full sequence is Hemoglobin subunit beta-2 (146 aa).

In terms of domain architecture, Globin spans 2–146 (GLTAHEKQLI…IADALGKGYH (145 aa)). Histidine 63 and histidine 92 together coordinate heme b.

It belongs to the globin family. Heterotetramer of two alpha chains and two beta chains. As to expression, red blood cells.

Functionally, involved in oxygen transport from the lung to the various peripheral tissues. This is Hemoglobin subunit beta-2 (hbb2) from Xenopus borealis (Kenyan clawed frog).